A 352-amino-acid chain; its full sequence is Forkhead box protein D5 (352 aa).

2 disordered regions span residues 1 to 32 and 47 to 92; these read MSLS…LGED and HSEM…GKAK. Positions 20–32 are enriched in acidic residues; that stretch reads SDEEDEIDILGED. The segment covering 73–82 has biased composition (low complexity); the sequence is ESEGGTSKDS. The segment at residues 97-191 is a DNA-binding region (fork-head); sequence KPPYSYIALI…DNGSFLRRRK (95 aa).

In terms of tissue distribution, expression begins in the newly forming dorsal mesoderm and is maintained during gastrulation at the dorsal blastopore lip (Spemann organizer). At the early neurula stages, expressed in a row of cells along the dorsal midline that are destined to become the fllor plate of the neural tube. At late neurula, expressed within the anterior and posterior poles of the embryo. After neural closure, expression is detected only in the tailtip, the otic vesicle and at the midbrain/hindbrain boundary.

It is found in the nucleus. Transcriptional repressor. This is Forkhead box protein D5 from Xenopus tropicalis (Western clawed frog).